Consider the following 1032-residue polypeptide: uncharacterized protein (1032 aa).

Disordered regions lie at residues 54–80 (NNNN…NNNN), 391–451 (QLQI…QTHL), and 884–934 (INNE…SKVK). Residues 884–907 (INNENNNENNNNYNGNINSNNNNN) show a composition bias toward low complexity.

This is an uncharacterized protein from Dictyostelium discoideum (Social amoeba).